The following is a 137-amino-acid chain: Glutamate mutase sigma subunit (137 aa).

The region spanning 3–137 is the B12-binding domain; sequence EVNLVLGVIG…KALKEDLGLM (135 aa). Adenosylcob(III)alamin contacts are provided by residues 13–17, histidine 16, 61–63, and 93–97; these read ADVHA, SSL, and NLVVG.

Belongs to the methylaspartate mutase GlmS subunit family. As to quaternary structure, heterotetramer composed of 2 epsilon subunits (GlmE) and 2 sigma subunits (GlmS). GlmE exists as a homodimer and GlmS as a monomer. Requires adenosylcob(III)alamin as cofactor.

It catalyses the reaction (2S,3S)-3-methyl-L-aspartate = L-glutamate. It participates in amino-acid degradation; L-glutamate degradation via mesaconate pathway; acetate and pyruvate from L-glutamate: step 1/4. In terms of biological role, catalyzes the carbon skeleton rearrangement of L-glutamate to L-threo-3-methylaspartate ((2S,3S)-3-methylaspartate). The protein is Glutamate mutase sigma subunit of Carboxydothermus hydrogenoformans (strain ATCC BAA-161 / DSM 6008 / Z-2901).